The chain runs to 294 residues: Diaminopimelate epimerase (294 aa).

Residues N11 and N78 each contribute to the substrate site. C87 functions as the Proton donor in the catalytic mechanism. Substrate contacts are provided by residues 88 to 89 (GN), N167, N203, and 221 to 222 (ER). C230 serves as the catalytic Proton acceptor. A substrate-binding site is contributed by 231 to 232 (GT).

The protein belongs to the diaminopimelate epimerase family. Homodimer.

The protein resides in the cytoplasm. The enzyme catalyses (2S,6S)-2,6-diaminopimelate = meso-2,6-diaminopimelate. It functions in the pathway amino-acid biosynthesis; L-lysine biosynthesis via DAP pathway; DL-2,6-diaminopimelate from LL-2,6-diaminopimelate: step 1/1. Functionally, catalyzes the stereoinversion of LL-2,6-diaminopimelate (L,L-DAP) to meso-diaminopimelate (meso-DAP), a precursor of L-lysine and an essential component of the bacterial peptidoglycan. This is Diaminopimelate epimerase from Mycobacterium avium (strain 104).